The sequence spans 260 residues: Triosephosphate isomerase (260 aa).

Residue 11 to 13 coordinates substrate; it reads NWK. The Electrophile role is filled by histidine 103. The Proton acceptor role is filled by glutamate 175. Residues glycine 181, serine 220, and 241–242 contribute to the substrate site; that span reads GG.

Belongs to the triosephosphate isomerase family. Homodimer.

It localises to the cytoplasm. It catalyses the reaction D-glyceraldehyde 3-phosphate = dihydroxyacetone phosphate. It participates in carbohydrate biosynthesis; gluconeogenesis. The protein operates within carbohydrate degradation; glycolysis; D-glyceraldehyde 3-phosphate from glycerone phosphate: step 1/1. Its function is as follows. Involved in the gluconeogenesis. Catalyzes stereospecifically the conversion of dihydroxyacetone phosphate (DHAP) to D-glyceraldehyde-3-phosphate (G3P). This is Triosephosphate isomerase from Shewanella sediminis (strain HAW-EB3).